Here is a 199-residue protein sequence, read N- to C-terminus: NAD(P)H quinone oxidoreductase PST3 (199 aa).

In terms of domain architecture, Flavodoxin-like spans 5–193 (VAIIIYSLYH…EIAFIQGKSF (189 aa)). FMN-binding positions include 11 to 15 (SLYHH) and 111 to 165 (IFVS…SPYG).

This sequence belongs to the WrbA family. Requires FMN as cofactor.

The protein resides in the cell membrane. It carries out the reaction a quinone + NADH + H(+) = a quinol + NAD(+). It catalyses the reaction a quinone + NADPH + H(+) = a quinol + NADP(+). Functionally, flavodoxin-like protein (FLP) that plays a role in cell wall integrity, oxidative stress protection and virulence. FLPs act as NAD(P)H quinone oxidoreductases. Reduces ubiquinone (coenzyme Q), enabling it to serve as an antioxidant in the membrane. This Candida albicans (strain SC5314 / ATCC MYA-2876) (Yeast) protein is NAD(P)H quinone oxidoreductase PST3.